A 179-amino-acid chain; its full sequence is Probable WRKY transcription factor 24 (179 aa).

The WRKY DNA-binding region spans 92–157 (SDDDVLDDGY…YEGVHNHPCE (66 aa)).

It belongs to the WRKY group II-c family.

The protein resides in the nucleus. Its function is as follows. Transcription factor. Interacts specifically with the W box (5'-(T)TGAC[CT]-3'), a frequently occurring elicitor-responsive cis-acting element. The chain is Probable WRKY transcription factor 24 (WRKY24) from Arabidopsis thaliana (Mouse-ear cress).